The sequence spans 72 residues: Teretoxin Tsu11.2 (72 aa).

Residues Met-1–Pro-21 form the signal peptide. The propeptide occupies Thr-22 to Arg-30.

Belongs to the teretoxin H (TH) superfamily. In terms of processing, contains 4 disulfide bonds. Expressed by the venom duct.

It localises to the secreted. In Terebra subulata (Chocolate spotted auger), this protein is Teretoxin Tsu11.2.